The following is a 295-amino-acid chain: MQNKEPDEFRESTSIFQIWLRFRQNTIALFSFYLLIALIFTALFASYLAPYADNRQFIGQELMPPSWVDRGKIAFFFGTDDLGRDILSRLIMGTRYTLGSALLVVFSVAIIGGALGIIAGLLKGIKARFVGHIFDAFLSLPILLIAVVISTLMEPSLWNAMFATLLAILPYFIHTIYRAIQKELEKDYVVMLKLEGISNQALLKSTILPNITVIYIQEVARAFVIAVLDISALSFISLGAQRPTPEWGAMIKDSLELLYLAPWTVLLPGFAIIFTILLSIIFSNGLTKAINQHQE.

6 helical membrane-spanning segments follow: residues 27 to 47 (IALFSFYLLIALIFTALFASY), 102 to 122 (LLVVFSVAIIGGALGIIAGLL), 129 to 149 (FVGHIFDAFLSLPILLIAVVI), 157 to 177 (LWNAMFATLLAILPYFIHTIY), 219 to 239 (VARAFVIAVLDISALSFISLG), and 262 to 282 (PWTVLLPGFAIIFTILLSIIF). Positions 98–278 (LGSALLVVFS…GFAIIFTILL (181 aa)) constitute an ABC transmembrane type-1 domain.

Belongs to the binding-protein-dependent transport system permease family. OppBC subfamily.

The protein localises to the cell inner membrane. Functionally, involved in a peptide intake transport system that plays a role in the resistance to antimicrobial peptides. The sequence is that of Peptide transport system permease protein SapC (sapC) from Haemophilus influenzae (strain ATCC 51907 / DSM 11121 / KW20 / Rd).